The chain runs to 681 residues: Epithelial splicing regulatory protein 1 (681 aa).

RRM domains follow at residues Thr225 to Gly302, Val326 to Ala406, and Asp445 to Ala525. Phosphoserine is present on Ser543. Arg582 is subject to Omega-N-methylarginine.

Belongs to the ESRP family. In terms of tissue distribution, epithelial cell-specific.

It is found in the nucleus. Functionally, mRNA splicing factor that regulates the formation of epithelial cell-specific isoforms. Specifically regulates the expression of FGFR2-IIIb, an epithelial cell-specific isoform of FGFR2. Also regulates the splicing of CD44, CTNND1, ENAH, 3 transcripts that undergo changes in splicing during the epithelial-to-mesenchymal transition (EMT). Acts by directly binding specific sequences in mRNAs. Binds the GU-rich sequence motifs in the ISE/ISS-3, a cis-element regulatory region present in the mRNA of FGFR2. Regulates splicing and expression of genes involved in inner ear development, auditory hair cell differentiation, and cell fate specification in the cochlear epithelium. This Homo sapiens (Human) protein is Epithelial splicing regulatory protein 1 (ESRP1).